The primary structure comprises 437 residues: Transcription factor TGAL5 (437 aa).

Residues 33-75 (QEPYSNSQSVGSTTDSSSAQNTMSQAELVSPASMRSDSGQEQQ) are disordered. The segment covering 37 to 50 (SNSQSVGSTTDSSS) has biased composition (low complexity). Positions 51-75 (AQNTMSQAELVSPASMRSDSGQEQQ) are enriched in polar residues. One can recognise a bZIP domain in the interval 126–170 (DAKTERRLAQNREAARKSRLRKKAYVQQLETSRIRLQQIEQELQR). The basic motif stretch occupies residues 128-148 (KTERRLAQNREAARKSRLRKK). The interval 154 to 168 (LETSRIRLQQIEQEL) is leucine-zipper. Residues 191-405 (AVMFDMDYTR…RALSSLWASR (215 aa)) form the DOG1 domain.

This sequence belongs to the bZIP family. In terms of assembly, interacts with NPR5/NH4, NH5.1 and NH5.2.

Its subcellular location is the nucleus. In terms of biological role, transcriptional regulator involved in defense response. The polypeptide is Transcription factor TGAL5 (Oryza sativa subsp. japonica (Rice)).